Reading from the N-terminus, the 214-residue chain is Guanylate kinase (214 aa).

The Guanylate kinase-like domain occupies 6-192 (GTLYIISAPS…ALEDLKSIFR (187 aa)). ATP is bound at residue 13 to 20 (APSGAGKT).

This sequence belongs to the guanylate kinase family.

It localises to the cytoplasm. It catalyses the reaction GMP + ATP = GDP + ADP. Its function is as follows. Essential for recycling GMP and indirectly, cGMP. The protein is Guanylate kinase of Pseudomonas syringae pv. tomato (strain ATCC BAA-871 / DC3000).